A 353-amino-acid polypeptide reads, in one-letter code: Photosystem II D2 protein (353 aa).

Threonine 2 carries the post-translational modification N-acetylthreonine. Threonine 2 carries the phosphothreonine modification. The helical transmembrane segment at 41 to 61 threads the bilayer; it reads CAYFALGGWFTGTTFVTSWYT. Histidine 118 serves as a coordination point for chlorophyll a. A helical membrane pass occupies residues 125–141; it reads GFMLRQFELARSVQLRP. Pheophytin a contacts are provided by glutamine 130 and asparagine 143. Residues 153–166 form a helical membrane-spanning segment; it reads VFVSVFLIYPLGQS. Chlorophyll a is bound at residue histidine 198. A helical transmembrane segment spans residues 208 to 228; that stretch reads AALLCAIHGATVENTLFEDGD. Residues histidine 215 and phenylalanine 262 each coordinate a plastoquinone. Histidine 215 is a binding site for Fe cation. Histidine 269 contacts Fe cation. A helical transmembrane segment spans residues 279–295; sequence GLWMSAIGVVGLALNLR.

The protein belongs to the reaction center PufL/M/PsbA/D family. PSII is composed of 1 copy each of membrane proteins PsbA, PsbB, PsbC, PsbD, PsbE, PsbF, PsbH, PsbI, PsbJ, PsbK, PsbL, PsbM, PsbT, PsbX, PsbY, PsbZ, Psb30/Ycf12, at least 3 peripheral proteins of the oxygen-evolving complex and a large number of cofactors. It forms dimeric complexes. Requires The D1/D2 heterodimer binds P680, chlorophylls that are the primary electron donor of PSII, and subsequent electron acceptors. It shares a non-heme iron and each subunit binds pheophytin, quinone, additional chlorophylls, carotenoids and lipids. There is also a Cl(-1) ion associated with D1 and D2, which is required for oxygen evolution. The PSII complex binds additional chlorophylls, carotenoids and specific lipids. as cofactor. Post-translationally, phosphorylated on threonine residue(s); phosphorylation increases with increasing light levels.

It is found in the plastid. The protein resides in the chloroplast thylakoid membrane. The catalysed reaction is 2 a plastoquinone + 4 hnu + 2 H2O = 2 a plastoquinol + O2. Its function is as follows. Photosystem II (PSII) is a light-driven water:plastoquinone oxidoreductase that uses light energy to abstract electrons from H(2)O, generating O(2) and a proton gradient subsequently used for ATP formation. It consists of a core antenna complex that captures photons, and an electron transfer chain that converts photonic excitation into a charge separation. The D1/D2 (PsbA/PsbD) reaction center heterodimer binds P680, the primary electron donor of PSII as well as several subsequent electron acceptors. D2 is needed for assembly of a stable PSII complex. The sequence is that of Photosystem II D2 protein from Marchantia polymorpha (Common liverwort).